Reading from the N-terminus, the 185-residue chain is Elongation factor P (185 aa).

This sequence belongs to the elongation factor P family.

The protein localises to the cytoplasm. It functions in the pathway protein biosynthesis; polypeptide chain elongation. Its function is as follows. Involved in peptide bond synthesis. Stimulates efficient translation and peptide-bond synthesis on native or reconstituted 70S ribosomes in vitro. Probably functions indirectly by altering the affinity of the ribosome for aminoacyl-tRNA, thus increasing their reactivity as acceptors for peptidyl transferase. This Brevibacillus brevis (strain 47 / JCM 6285 / NBRC 100599) protein is Elongation factor P.